The sequence spans 252 residues: Serine/threonine phosphatase stp (252 aa).

A compositionally biased stretch (basic and acidic residues) spans Met1 to Asp18. Residues Met1–Phe23 are disordered. One can recognise a PPM-type phosphatase domain in the interval His2–Arg242. Mn(2+) is bound by residues Asp36, Gly37, Asp194, and Asp233.

It belongs to the PP2C family. Mn(2+) serves as cofactor.

Its subcellular location is the cytoplasm. It is found in the membrane. The enzyme catalyses O-phospho-L-seryl-[protein] + H2O = L-seryl-[protein] + phosphate. The catalysed reaction is O-phospho-L-threonyl-[protein] + H2O = L-threonyl-[protein] + phosphate. Functionally, protein phosphatase that dephosphorylates EF-Tu. The chain is Serine/threonine phosphatase stp (stp) from Listeria welshimeri serovar 6b (strain ATCC 35897 / DSM 20650 / CCUG 15529 / CIP 8149 / NCTC 11857 / SLCC 5334 / V8).